The sequence spans 412 residues: Argininosuccinate synthase (412 aa).

ATP contacts are provided by residues 10-18 (AYSGGLDTS) and Ala-36. The L-citrulline site is built by Tyr-87 and Ser-92. Residue Tyr-87 is modified to Phosphotyrosine. Lys-112 carries the post-translational modification N6-acetyllysine. Position 113 is a phosphotyrosine (Tyr-113). 115–123 (SHGATGKGN) lines the ATP pocket. L-aspartate is bound by residues Thr-119, Asn-123, and Asp-124. L-citrulline is bound at residue Asn-123. Arg-127 provides a ligand contact to L-citrulline. Residues Lys-165 and Lys-176 each carry the N6-acetyllysine; by CLOCK modification. Ser-177 and Ser-180 each carry phosphoserine. Residues Ser-180 and Ser-189 each contribute to the L-citrulline site. Thr-219 carries the post-translational modification Phosphothreonine. Glu-270 and Tyr-282 together coordinate L-citrulline.

The protein belongs to the argininosuccinate synthase family. Type 1 subfamily. In terms of assembly, homotetramer. Interacts with NMRAL1. Interacts with CLOCK; in a circadian manner. Forms tissue-specific complexes with ASL, SLC7A1, HSP90AA1 and nitric oxide synthase NOS1, NOS2 or NOS3; the complex regulates cell-autonomous L-arginine synthesis and citrulline recycling while channeling extracellular L-arginine to nitric oxide synthesis pathway. In terms of processing, acetylated by CLOCK in a circadian manner which negatively regulates its enzyme activity. Deacetylated by histone deacetylases.

It is found in the cytoplasm. Its subcellular location is the cytosol. The enzyme catalyses L-citrulline + L-aspartate + ATP = 2-(N(omega)-L-arginino)succinate + AMP + diphosphate + H(+). The protein operates within amino-acid biosynthesis; L-arginine biosynthesis; L-arginine from L-ornithine and carbamoyl phosphate: step 2/3. It functions in the pathway nitrogen metabolism; urea cycle; (N(omega)-L-arginino)succinate from L-aspartate and L-citrulline: step 1/1. Functionally, one of the enzymes of the urea cycle, the metabolic pathway transforming neurotoxic amonia produced by protein catabolism into inocuous urea in the liver of ureotelic animals. Catalyzes the formation of arginosuccinate from aspartate, citrulline and ATP and together with ASL it is responsible for the biosynthesis of arginine in most body tissues. Indirectly, may be involved in the control of blood pressure. This chain is Argininosuccinate synthase, found in Rattus norvegicus (Rat).